Reading from the N-terminus, the 94-residue chain is Acylphosphatase (94 aa).

An Acylphosphatase-like domain is found at 5 to 94 (RLTAFVHGHV…PRDVEGFVER (90 aa)). Residues Arg-20 and Asn-38 contribute to the active site.

Belongs to the acylphosphatase family.

The enzyme catalyses an acyl phosphate + H2O = a carboxylate + phosphate + H(+). The protein is Acylphosphatase (acyP) of Corynebacterium glutamicum (strain R).